Reading from the N-terminus, the 436-residue chain is Protein 60A (436 aa).

The first 27 residues, 1–27 (MTASLVVLPSLWLILIIFTAPYTHCTQ), serve as a signal peptide directing secretion. Residues 28–317 (SGIYIDNGKD…STLHQRKKSK (290 aa)) constitute a propeptide that is removed on maturation. 4 N-linked (GlcNAc...) asparagine glycosylation sites follow: Asn102, Asn114, Asn217, and Asn229. A disordered region spans residues 293-322 (IKSTSGHSTQKRTKRSTLHQRKKSKSEPVN). Over residues 301–316 (TQKRTKRSTLHQRKKS) the composition is skewed to basic residues. 3 cysteine pairs are disulfide-bonded: Cys335–Cys401, Cys364–Cys433, and Cys368–Cys435. An N-linked (GlcNAc...) asparagine glycan is attached at Asn377.

This sequence belongs to the TGF-beta family. Homodimer; disulfide-linked.

Its subcellular location is the secreted. The sequence is that of Protein 60A (gbb) from Drosophila virilis (Fruit fly).